Consider the following 263-residue polypeptide: Indole-3-glycerol phosphate synthase (263 aa).

This sequence belongs to the TrpC family.

The catalysed reaction is 1-(2-carboxyphenylamino)-1-deoxy-D-ribulose 5-phosphate + H(+) = (1S,2R)-1-C-(indol-3-yl)glycerol 3-phosphate + CO2 + H2O. Its pathway is amino-acid biosynthesis; L-tryptophan biosynthesis; L-tryptophan from chorismate: step 4/5. This chain is Indole-3-glycerol phosphate synthase, found in Desulfosudis oleivorans (strain DSM 6200 / JCM 39069 / Hxd3) (Desulfococcus oleovorans).